The chain runs to 315 residues: Calumenin (315 aa).

The first 19 residues, 1 to 19 (MDLRQFLMCLSLCTAFALS), serve as a signal peptide directing secretion. Position 44 is a phosphoserine (Ser44). Tyr47 bears the Phosphotyrosine mark. At Thr65 the chain carries Phosphothreonine. 6 consecutive EF-hand domains span residues 68-103 (ESKERLGKIVSKIDDDKDGFVTVDELKDWIKFAQKR), 104-139 (WIYEDVERQWKGHDLNEDGLVSWEEYKNATYGYVLD), 151-186 (QMMVRDERRFKMADKDGDLIATKEEFTAFLHPEEYD), 188-223 (MKDIVVQETMEDIDKNADGFIDLEEYIGDMYSHDGN), 229-264 (WVKTEREQFVEFRDKNRDGKMDKEETKDWILPSDYD), and 265-300 (HAEAEARHLVYESDQNKDGKLTKEEIVDKYDLFVGS). Ser69 bears the Phosphoserine mark. 8 residues coordinate Ca(2+): Asp81, Asp83, Asp85, Glu92, Asp117, Asn119, Asp121, and Glu128. A glycan (N-linked (GlcNAc...) asparagine) is linked at Asn131. Asp164 contacts Ca(2+). Lys165 is subject to N6-acetyllysine. Residues Asp166, Asp168, Glu175, Asp201, Asn203, Asp205, Glu212, Asp242, Asn244, Asp246, Lys248, and Glu253 each contribute to the Ca(2+) site. Thr254 is subject to Phosphothreonine. 2 positions are modified to phosphoserine: Ser261 and Ser277. Ca(2+)-binding residues include Asp278, Asn280, Asp282, Lys284, and Glu289. The short motif at 312–315 (HDEF) is the Prevents secretion from ER element.

The protein belongs to the CREC family. Interacts with GGCX.

It localises to the endoplasmic reticulum membrane. The protein resides in the golgi apparatus. It is found in the secreted. Its subcellular location is the melanosome. The protein localises to the sarcoplasmic reticulum lumen. In terms of biological role, involved in regulation of vitamin K-dependent carboxylation of multiple N-terminal glutamate residues. Seems to inhibit gamma-carboxylase GGCX. Binds 7 calcium ions with a low affinity. This is Calumenin (CALU) from Pongo abelii (Sumatran orangutan).